The following is a 548-amino-acid chain: Chaperonin GroEL (548 aa).

ATP-binding positions include T30–P33, K51, D87–T91, G415, N479–A481, and D495.

This sequence belongs to the chaperonin (HSP60) family. As to quaternary structure, forms a cylinder of 14 subunits composed of two heptameric rings stacked back-to-back. Interacts with the co-chaperonin GroES.

The protein localises to the cytoplasm. It catalyses the reaction ATP + H2O + a folded polypeptide = ADP + phosphate + an unfolded polypeptide.. Its function is as follows. Together with its co-chaperonin GroES, plays an essential role in assisting protein folding. The GroEL-GroES system forms a nano-cage that allows encapsulation of the non-native substrate proteins and provides a physical environment optimized to promote and accelerate protein folding. This chain is Chaperonin GroEL, found in Salmonella arizonae (strain ATCC BAA-731 / CDC346-86 / RSK2980).